The following is a 532-amino-acid chain: CTP synthase (532 aa).

Positions 1–267 (MTKYIFVTGG…DDIVLEHLQL (267 aa)) are amidoligase domain. Ser13 contacts CTP. Ser13 contacts UTP. 14 to 19 (SIGKGI) is an ATP binding site. L-glutamine is bound at residue Tyr54. Asp71 contacts ATP. Residues Asp71 and Glu141 each coordinate Mg(2+). CTP-binding positions include 148–150 (DIE), 188–193 (KTKPTQ), and Lys224. UTP contacts are provided by residues 188 to 193 (KTKPTQ) and Lys224. A Glutamine amidotransferase type-1 domain is found at 292–532 (RIGLVGKYVS…DFVGAALNNK (241 aa)). Gly354 provides a ligand contact to L-glutamine. The active-site Nucleophile; for glutamine hydrolysis is Cys381. L-glutamine-binding positions include 382-385 (LGMQ), Glu405, and Arg462. Catalysis depends on residues His507 and Glu509.

This sequence belongs to the CTP synthase family. Homotetramer.

The enzyme catalyses UTP + L-glutamine + ATP + H2O = CTP + L-glutamate + ADP + phosphate + 2 H(+). The catalysed reaction is L-glutamine + H2O = L-glutamate + NH4(+). It carries out the reaction UTP + NH4(+) + ATP = CTP + ADP + phosphate + 2 H(+). It participates in pyrimidine metabolism; CTP biosynthesis via de novo pathway; CTP from UDP: step 2/2. Its activity is regulated as follows. Allosterically activated by GTP, when glutamine is the substrate; GTP has no effect on the reaction when ammonia is the substrate. The allosteric effector GTP functions by stabilizing the protein conformation that binds the tetrahedral intermediate(s) formed during glutamine hydrolysis. Inhibited by the product CTP, via allosteric rather than competitive inhibition. Functionally, catalyzes the ATP-dependent amination of UTP to CTP with either L-glutamine or ammonia as the source of nitrogen. Regulates intracellular CTP levels through interactions with the four ribonucleotide triphosphates. The sequence is that of CTP synthase from Listeria innocua serovar 6a (strain ATCC BAA-680 / CLIP 11262).